We begin with the raw amino-acid sequence, 406 residues long: Coenzyme A biosynthesis bifunctional protein CoaBC (406 aa).

The interval 2–190 (SLAGKKIVLG…SPVNDLKHLN (189 aa)) is phosphopantothenoylcysteine decarboxylase. Cysteine 158 serves as the catalytic Proton donor. The tract at residues 191 to 406 (IMITAGPTRE…VTRYDEKNRR (216 aa)) is phosphopantothenate--cysteine ligase. CTP-binding positions include 273 to 275 (GCA), aspartate 279, lysine 289, 308 to 311 (PDIV), phenylalanine 327, lysine 341, and lysine 345.

In the N-terminal section; belongs to the HFCD (homo-oligomeric flavin containing Cys decarboxylase) superfamily. The protein in the C-terminal section; belongs to the PPC synthetase family. Requires Mg(2+) as cofactor. The cofactor is FMN.

It carries out the reaction N-[(R)-4-phosphopantothenoyl]-L-cysteine + H(+) = (R)-4'-phosphopantetheine + CO2. The catalysed reaction is (R)-4'-phosphopantothenate + L-cysteine + CTP = N-[(R)-4-phosphopantothenoyl]-L-cysteine + CMP + diphosphate + H(+). It functions in the pathway cofactor biosynthesis; coenzyme A biosynthesis; CoA from (R)-pantothenate: step 2/5. Its pathway is cofactor biosynthesis; coenzyme A biosynthesis; CoA from (R)-pantothenate: step 3/5. Functionally, catalyzes two sequential steps in the biosynthesis of coenzyme A. In the first step cysteine is conjugated to 4'-phosphopantothenate to form 4-phosphopantothenoylcysteine. In the second step the latter compound is decarboxylated to form 4'-phosphopantotheine. This Escherichia coli O6:H1 (strain CFT073 / ATCC 700928 / UPEC) protein is Coenzyme A biosynthesis bifunctional protein CoaBC.